The chain runs to 374 residues: Chaperone protein DnaJ (374 aa).

Residues 5 to 70 (DYYEVLGVER…NKRAAYDQYG (66 aa)) form the J domain. Residues 133–211 (GTSVNIRVPT…CHGEGRVEEY (79 aa)) form a CR-type zinc finger. Positions 146, 149, 163, 166, 185, 188, 199, and 202 each coordinate Zn(2+). 4 CXXCXGXG motif repeats span residues 146–153 (CKPCDGSG), 163–170 (CPTCGGIG), 185–192 (CPRCHGQG), and 199–206 (CDSCHGEG).

This sequence belongs to the DnaJ family. Homodimer. The cofactor is Zn(2+).

Its subcellular location is the cytoplasm. Functionally, participates actively in the response to hyperosmotic and heat shock by preventing the aggregation of stress-denatured proteins and by disaggregating proteins, also in an autonomous, DnaK-independent fashion. Unfolded proteins bind initially to DnaJ; upon interaction with the DnaJ-bound protein, DnaK hydrolyzes its bound ATP, resulting in the formation of a stable complex. GrpE releases ADP from DnaK; ATP binding to DnaK triggers the release of the substrate protein, thus completing the reaction cycle. Several rounds of ATP-dependent interactions between DnaJ, DnaK and GrpE are required for fully efficient folding. Also involved, together with DnaK and GrpE, in the DNA replication of plasmids through activation of initiation proteins. This chain is Chaperone protein DnaJ, found in Pseudomonas fluorescens (strain SBW25).